Reading from the N-terminus, the 694-residue chain is U-box domain-containing protein 1 (694 aa).

In terms of domain architecture, U-box spans 292–366 (NIPDEFRCPI…HQWCYENNVK (75 aa)). ARM repeat units follow at residues 392-432 (SENK…LLAK), 435-474 (MDNR…NLSI), 476-516 (DNNK…SLSM), 519-558 (DCKV…NLAV), 560-599 (NPNK…VLLG), 601-641 (SEGL…GLCK), and 646-685 (LVAM…LLNR).

Interacts with LYK3. Binds to NORK/DMI2. Phosphorylated by LYK3 in vitro. Phosphorylated by NORK/DMI2. Present ubiquitously at very low levels during nonsymbiotic growth. Accumulates in roots and nodules during symbiotic growth with rhizobia and mycorrhiza.

The protein resides in the cell membrane. The enzyme catalyses S-ubiquitinyl-[E2 ubiquitin-conjugating enzyme]-L-cysteine + [acceptor protein]-L-lysine = [E2 ubiquitin-conjugating enzyme]-L-cysteine + N(6)-ubiquitinyl-[acceptor protein]-L-lysine.. The protein operates within protein modification; protein ubiquitination. Exhibits U-box-dependent E3 ubiquitin ligase activity in vitro. Negatively modulates successive stages of infection and development of rhizobial (e.g. Sinorhizobium meliloti) and arbuscular mycorrhizal fungi (AM, e.g. Rhizophagus irregularis) symbioses, in an ubiquitin ligase activity-dependent manner. Negative regulator of the LYK3 signaling pathway leading to nitrogen-fixing symbiosis (e.g. infection and nodulation) by rhizobia. May be involved in the discrimination of rhizobium strains producing variant Nod factors. The chain is U-box domain-containing protein 1 from Medicago truncatula (Barrel medic).